Reading from the N-terminus, the 132-residue chain is Prefoldin subunit alpha (132 aa).

Belongs to the prefoldin subunit alpha family. Heterohexamer of two alpha and four beta subunits.

The protein resides in the cytoplasm. Functionally, molecular chaperone capable of stabilizing a range of proteins. Seems to fulfill an ATP-independent, HSP70-like function in archaeal de novo protein folding. The chain is Prefoldin subunit alpha from Pyrobaculum islandicum (strain DSM 4184 / JCM 9189 / GEO3).